Reading from the N-terminus, the 209-residue chain is Octanoyltransferase (209 aa).

A BPL/LPL catalytic domain is found at 29–209 (EHTPDELWVV…CHQLQPEIDS (181 aa)). Residues 71–78 (RGGQVTYH), 138–140 (SLG), and 151–153 (GLA) each bind substrate. The active-site Acyl-thioester intermediate is cysteine 169.

This sequence belongs to the LipB family.

It is found in the cytoplasm. It catalyses the reaction octanoyl-[ACP] + L-lysyl-[protein] = N(6)-octanoyl-L-lysyl-[protein] + holo-[ACP] + H(+). The protein operates within protein modification; protein lipoylation via endogenous pathway; protein N(6)-(lipoyl)lysine from octanoyl-[acyl-carrier-protein]: step 1/2. Its function is as follows. Catalyzes the transfer of endogenously produced octanoic acid from octanoyl-acyl-carrier-protein onto the lipoyl domains of lipoate-dependent enzymes. Lipoyl-ACP can also act as a substrate although octanoyl-ACP is likely to be the physiological substrate. The chain is Octanoyltransferase from Hydrogenovibrio crunogenus (strain DSM 25203 / XCL-2) (Thiomicrospira crunogena).